We begin with the raw amino-acid sequence, 416 residues long: Glutamyl-tRNA reductase (416 aa).

Substrate is bound by residues 49–52 (TCNR), serine 105, 110–112 (EPQ), and glutamine 116. Cysteine 50 (nucleophile) is an active-site residue. 185–190 (GAGETI) is a binding site for NADP(+).

Belongs to the glutamyl-tRNA reductase family. In terms of assembly, homodimer.

The catalysed reaction is (S)-4-amino-5-oxopentanoate + tRNA(Glu) + NADP(+) = L-glutamyl-tRNA(Glu) + NADPH + H(+). It participates in porphyrin-containing compound metabolism; protoporphyrin-IX biosynthesis; 5-aminolevulinate from L-glutamyl-tRNA(Glu): step 1/2. In terms of biological role, catalyzes the NADPH-dependent reduction of glutamyl-tRNA(Glu) to glutamate 1-semialdehyde (GSA). In Shewanella piezotolerans (strain WP3 / JCM 13877), this protein is Glutamyl-tRNA reductase.